The following is a 376-amino-acid chain: Queuine tRNA-ribosyltransferase accessory subunit 2 (376 aa).

Positions 323, 325, 328, and 354 each coordinate Zn(2+).

The protein belongs to the queuine tRNA-ribosyltransferase family. QTRT2 subfamily. As to quaternary structure, heterodimer of a catalytic subunit and an accessory subunit. It depends on Zn(2+) as a cofactor.

It localises to the cytoplasm. In terms of biological role, non-catalytic subunit of the queuine tRNA-ribosyltransferase (TGT) that catalyzes the base-exchange of a guanine (G) residue with queuine (Q) at position 34 (anticodon wobble position) in tRNAs with GU(N) anticodons (tRNA-Asp, -Asn, -His and -Tyr), resulting in the hypermodified nucleoside queuosine (7-(((4,5-cis-dihydroxy-2-cyclopenten-1-yl)amino)methyl)-7-deazaguanosine). This is Queuine tRNA-ribosyltransferase accessory subunit 2 from Caenorhabditis briggsae.